The chain runs to 162 residues: NADH-quinone oxidoreductase subunit I 2 (162 aa).

4Fe-4S ferredoxin-type domains lie at 52 to 82 and 93 to 122; these read LRRY…IEAG and VRYD…EGPN. Residues Cys-62, Cys-65, Cys-68, Cys-72, Cys-102, Cys-105, Cys-108, and Cys-112 each coordinate [4Fe-4S] cluster.

Belongs to the complex I 23 kDa subunit family. NDH-1 is composed of 14 different subunits. Subunits NuoA, H, J, K, L, M, N constitute the membrane sector of the complex. The cofactor is [4Fe-4S] cluster.

The protein localises to the cell inner membrane. The enzyme catalyses a quinone + NADH + 5 H(+)(in) = a quinol + NAD(+) + 4 H(+)(out). In terms of biological role, NDH-1 shuttles electrons from NADH, via FMN and iron-sulfur (Fe-S) centers, to quinones in the respiratory chain. The immediate electron acceptor for the enzyme in this species is believed to be ubiquinone. Couples the redox reaction to proton translocation (for every two electrons transferred, four hydrogen ions are translocated across the cytoplasmic membrane), and thus conserves the redox energy in a proton gradient. The sequence is that of NADH-quinone oxidoreductase subunit I 2 from Rhodopseudomonas palustris (strain HaA2).